We begin with the raw amino-acid sequence, 545 residues long: MTLLTQSSTWQALSAHSKNVPHMRELFATDAARFNKMSLSACGLLLDYSKNRATAETLDLLFALASNSQLEAKIKAMFAGEIINTTEKRAVLHTALRSTAEQSIIAEGQDIVPEVQQTLNKMQGFVSSVTSGQWKGYTSKAITDIVSIGIGGSFLGPKIVSQALRPYWNPELKCHFVANVDGTSISEKLKLLDPETTLFIMSSKSFGTQETLTNTLTAREWFLAKGGLQSDVAKHFVAVTSNVAKATDFGIDADNIFPMWDWVGGRYSLWSAIGLPIALLIGMDNFRALLSGAHQMDEHFANAPLTENMPVIMGLLSLWYGNFFNAQSHVVLTYDHYLRGLPAYFQQLDMESNGKSVTLNGTDVDYSTGPVIWGGEGTNGQHAYHQLLHQGTALIPADFIMPLQSHNPIGEHHDQLASNCFGQTQALMQGRTFDEALAELANSALSATEKQLIAKHKVMPGNKPSNTLLMDKLTPSTLGALIALYEHRTFVQGAIWDINSFDQWGVELGKDLGNDVLARIGASQDCDALDASSNALINLYRQGKI.

Glutamate 351 acts as the Proton donor in catalysis. Catalysis depends on residues histidine 382 and lysine 510.

The protein belongs to the GPI family.

Its subcellular location is the cytoplasm. The catalysed reaction is alpha-D-glucose 6-phosphate = beta-D-fructose 6-phosphate. The protein operates within carbohydrate biosynthesis; gluconeogenesis. It functions in the pathway carbohydrate degradation; glycolysis; D-glyceraldehyde 3-phosphate and glycerone phosphate from D-glucose: step 2/4. In terms of biological role, catalyzes the reversible isomerization of glucose-6-phosphate to fructose-6-phosphate. The chain is Glucose-6-phosphate isomerase from Shewanella baltica (strain OS155 / ATCC BAA-1091).